The following is a 385-amino-acid chain: T-box transcription factor TBX10 (385 aa).

Positions 22–61 (TTSSGWEPRLGSPFPSGPCTSSTGAQAVAEPTGQGPKNPR) are disordered. Positions 69 to 252 (LEMKPLWEEF…SNPFAKGFRE (184 aa)) form a DNA-binding region, T-box.

Its subcellular location is the nucleus. Its function is as follows. Probable transcriptional regulator involved in developmental processes. This is T-box transcription factor TBX10 (TBX10) from Homo sapiens (Human).